Reading from the N-terminus, the 470-residue chain is Neuraminidase (470 aa).

Topologically, residues 1 to 14 (MNPNQKILCTSATA) are intravirion. The tract at residues 11 to 33 (SATALVIGTIAVLIGITNLGLNI) is involved in apical transport and lipid raft association. The chain crosses the membrane as a helical span at residues 15–35 (LVIGTIAVLIGITNLGLNIGL). The interval 36–89 (HLKPSCNCSHSQPEATNASQTIINNYYNDTNITQISNTNIQVEERAIRDFNNLT) is hypervariable stalk region. The Virion surface segment spans residues 36-470 (HLKPSCNCSH…PDGAKIEYFL (435 aa)). N-linked (GlcNAc...) asparagine; by host glycosylation is found at Asn42, Asn52, Asn63, Asn66, and Asn87. Residues 92–470 (LCTINSWHIY…PDGAKIEYFL (379 aa)) form a head of neuraminidase region. 9 cysteine pairs are disulfide-bonded: Cys93-Cys419, Cys125-Cys130, Cys177-Cys195, Cys185-Cys232, Cys234-Cys239, Cys280-Cys293, Cys282-Cys291, Cys320-Cys338, and Cys423-Cys449. Arg119 is a substrate binding site. Asn147 is a glycosylation site (N-linked (GlcNAc...) asparagine; by host). The active-site Proton donor/acceptor is the Asp152. Residue Arg153 participates in substrate binding. N-linked (GlcNAc...) asparagine; by host glycosylation occurs at Asn202. A substrate-binding site is contributed by 278–279 (EE). Arg294 serves as a coordination point for substrate. Ca(2+)-binding residues include Asp295, Gly299, Asp326, and Asn348. Arg372 lines the substrate pocket. Tyr406 functions as the Nucleophile in the catalytic mechanism.

The protein belongs to the glycosyl hydrolase 34 family. As to quaternary structure, homotetramer. Ca(2+) is required as a cofactor. N-glycosylated.

It is found in the virion membrane. It localises to the host apical cell membrane. The catalysed reaction is Hydrolysis of alpha-(2-&gt;3)-, alpha-(2-&gt;6)-, alpha-(2-&gt;8)- glycosidic linkages of terminal sialic acid residues in oligosaccharides, glycoproteins, glycolipids, colominic acid and synthetic substrates.. With respect to regulation, inhibited by the neuraminidase inhibitors zanamivir (Relenza) and oseltamivir (Tamiflu). These drugs interfere with the release of progeny virus from infected cells and are effective against all influenza strains. Resistance to neuraminidase inhibitors is quite rare. Functionally, catalyzes the removal of terminal sialic acid residues from viral and cellular glycoconjugates. Cleaves off the terminal sialic acids on the glycosylated HA during virus budding to facilitate virus release. Additionally helps virus spread through the circulation by further removing sialic acids from the cell surface. These cleavages prevent self-aggregation and ensure the efficient spread of the progeny virus from cell to cell. Otherwise, infection would be limited to one round of replication. Described as a receptor-destroying enzyme because it cleaves a terminal sialic acid from the cellular receptors. May facilitate viral invasion of the upper airways by cleaving the sialic acid moieties on the mucin of the airway epithelial cells. Likely to plays a role in the budding process through its association with lipid rafts during intracellular transport. May additionally display a raft-association independent effect on budding. Plays a role in the determination of host range restriction on replication and virulence. Sialidase activity in late endosome/lysosome traffic seems to enhance virus replication. This chain is Neuraminidase, found in Aves.